The primary structure comprises 327 residues: Transaldolase (327 aa).

The active-site Schiff-base intermediate with substrate is the lysine 132.

The protein belongs to the transaldolase family. Type 1 subfamily.

The protein resides in the cytoplasm. It carries out the reaction D-sedoheptulose 7-phosphate + D-glyceraldehyde 3-phosphate = D-erythrose 4-phosphate + beta-D-fructose 6-phosphate. It functions in the pathway carbohydrate degradation; pentose phosphate pathway; D-glyceraldehyde 3-phosphate and beta-D-fructose 6-phosphate from D-ribose 5-phosphate and D-xylulose 5-phosphate (non-oxidative stage): step 2/3. Functionally, transaldolase is important for the balance of metabolites in the pentose-phosphate pathway. This Chlamydia trachomatis serovar D (strain ATCC VR-885 / DSM 19411 / UW-3/Cx) protein is Transaldolase.